The following is a 243-amino-acid chain: UDP-2,3-diacylglucosamine hydrolase (243 aa).

Residues aspartate 8, histidine 10, aspartate 41, asparagine 79, and histidine 114 each contribute to the Mn(2+) site. 79–80 (NR) serves as a coordination point for substrate. The substrate site is built by aspartate 122, lysine 164, lysine 167, and histidine 195. Residues histidine 195 and histidine 197 each contribute to the Mn(2+) site.

The protein belongs to the LpxH family. The cofactor is Mn(2+).

The protein localises to the cell inner membrane. The enzyme catalyses UDP-2-N,3-O-bis[(3R)-3-hydroxytetradecanoyl]-alpha-D-glucosamine + H2O = 2-N,3-O-bis[(3R)-3-hydroxytetradecanoyl]-alpha-D-glucosaminyl 1-phosphate + UMP + 2 H(+). Its pathway is glycolipid biosynthesis; lipid IV(A) biosynthesis; lipid IV(A) from (3R)-3-hydroxytetradecanoyl-[acyl-carrier-protein] and UDP-N-acetyl-alpha-D-glucosamine: step 4/6. In terms of biological role, hydrolyzes the pyrophosphate bond of UDP-2,3-diacylglucosamine to yield 2,3-diacylglucosamine 1-phosphate (lipid X) and UMP by catalyzing the attack of water at the alpha-P atom. Involved in the biosynthesis of lipid A, a phosphorylated glycolipid that anchors the lipopolysaccharide to the outer membrane of the cell. The polypeptide is UDP-2,3-diacylglucosamine hydrolase (Vibrio vulnificus (strain CMCP6)).